Here is a 457-residue protein sequence, read N- to C-terminus: Adenylosuccinate synthetase isozyme 2 A (457 aa).

Residues 40–46 (GDEGKGK) and 68–70 (GHT) contribute to the GTP site. Asp-41 acts as the Proton acceptor in catalysis. Mg(2+) is bound by residues Asp-41 and Gly-68. Substrate is bound at residue Asp-41. Residues 41–44 (DEGK), 66–69 (NAGH), Thr-163, Arg-177, Asn-256, Thr-271, and Arg-335 each bind IMP. His-69 (proton donor) is an active-site residue. 331–337 (VTTGRKR) contributes to the substrate binding site. Residues Arg-337, 363-365 (KLD), and 445-448 (GVGK) contribute to the GTP site.

The protein belongs to the adenylosuccinate synthetase family. As to quaternary structure, homodimer. It depends on Mg(2+) as a cofactor.

The protein localises to the cytoplasm. It localises to the mitochondrion. The catalysed reaction is IMP + L-aspartate + GTP = N(6)-(1,2-dicarboxyethyl)-AMP + GDP + phosphate + 2 H(+). It functions in the pathway purine metabolism; AMP biosynthesis via de novo pathway; AMP from IMP: step 1/2. With respect to regulation, inhibited competitively by AMP and IMP and non-competitively by fructose 1,6-bisphosphate. In terms of biological role, plays an important role in the de novo pathway and in the salvage pathway of purine nucleotide biosynthesis. Catalyzes the first committed step in the biosynthesis of AMP from IMP. The sequence is that of Adenylosuccinate synthetase isozyme 2 A (adss2-a) from Xenopus tropicalis (Western clawed frog).